A 519-amino-acid chain; its full sequence is Threonine synthase, chloroplastic (519 aa).

The N-terminal 40 residues, 1-40 (MAASCMLRSSFISPGLPQLHHQSTSKPNNGIHFFTPIKAT), are a transit peptide targeting the chloroplast. At Lys-196 the chain carries N6-(pyridoxal phosphate)lysine. Residues 328 to 332 (GNLGN) and Thr-465 each bind pyridoxal 5'-phosphate.

Belongs to the threonine synthase family. As to quaternary structure, homodimer. It depends on pyridoxal 5'-phosphate as a cofactor.

Its subcellular location is the plastid. The protein resides in the chloroplast. The enzyme catalyses O-phospho-L-homoserine + H2O = L-threonine + phosphate. It participates in amino-acid biosynthesis; L-threonine biosynthesis; L-threonine from L-aspartate: step 5/5. Its activity is regulated as follows. Allosterically activated by S-adenosyl-methionine (SAM). Its function is as follows. Catalyzes the gamma-elimination of phosphate from L-phosphohomoserine and the beta-addition of water to produce L-threonine. This Solanum tuberosum (Potato) protein is Threonine synthase, chloroplastic.